The sequence spans 539 residues: Chaperonin GroEL (539 aa).

ATP contacts are provided by residues 29–32, 86–90, glycine 413, 476–478, and aspartate 492; these read TLGP, DGTTT, and NAA.

The protein belongs to the chaperonin (HSP60) family. As to quaternary structure, forms a cylinder of 14 subunits composed of two heptameric rings stacked back-to-back. Interacts with the co-chaperonin GroES.

Its subcellular location is the cytoplasm. It carries out the reaction ATP + H2O + a folded polypeptide = ADP + phosphate + an unfolded polypeptide.. Its function is as follows. Together with its co-chaperonin GroES, plays an essential role in assisting protein folding. The GroEL-GroES system forms a nano-cage that allows encapsulation of the non-native substrate proteins and provides a physical environment optimized to promote and accelerate protein folding. The protein is Chaperonin GroEL of Macrococcus caseolyticus (strain JCSC5402) (Macrococcoides caseolyticum).